The chain runs to 498 residues: ATP synthase subunit beta, chloroplastic (498 aa).

172–179 (GGAGVGKT) provides a ligand contact to ATP.

Belongs to the ATPase alpha/beta chains family. As to quaternary structure, F-type ATPases have 2 components, CF(1) - the catalytic core - and CF(0) - the membrane proton channel. CF(1) has five subunits: alpha(3), beta(3), gamma(1), delta(1), epsilon(1). CF(0) has four main subunits: a(1), b(1), b'(1) and c(9-12).

The protein localises to the plastid. Its subcellular location is the chloroplast thylakoid membrane. It carries out the reaction ATP + H2O + 4 H(+)(in) = ADP + phosphate + 5 H(+)(out). In terms of biological role, produces ATP from ADP in the presence of a proton gradient across the membrane. The catalytic sites are hosted primarily by the beta subunits. In Drimys granadensis, this protein is ATP synthase subunit beta, chloroplastic.